Reading from the N-terminus, the 529-residue chain is Phosphoenolpyruvate carboxykinase (ATP) (529 aa).

Substrate is bound at residue Arg-52. Ca(2+) is bound by residues Arg-130, Asn-131, and Phe-133. Tyr-191 and Lys-197 together coordinate substrate. ATP contacts are provided by residues Lys-197, His-216, and 232-240 (GLSGTGKTT). Mn(2+)-binding residues include Lys-197 and His-216. Mn(2+) is bound at residue Asp-253. Residue Gly-267 participates in Ca(2+) binding. ATP-binding positions include Glu-281, Arg-319, 438–439 (RF), Phe-439, and Thr-444. Arg-319 is a binding site for substrate.

Belongs to the phosphoenolpyruvate carboxykinase (ATP) family. Dimer of dimers. Mn(2+) is required as a cofactor.

It is found in the cytoplasm. The catalysed reaction is oxaloacetate + ATP = phosphoenolpyruvate + ADP + CO2. It participates in carbohydrate biosynthesis; gluconeogenesis. Allosterically activated by calcium. Functionally, involved in gluconeogenesis. Catalyzes the conversion of oxaloacetate (OAA) to phosphoenolpyruvate (PEP) through direct phosphoryl transfer between the nucleoside triphosphate and OAA. In Thermus thermophilus (strain ATCC 27634 / DSM 579 / HB8), this protein is Phosphoenolpyruvate carboxykinase (ATP).